Reading from the N-terminus, the 322-residue chain is Short chain dehydrogenase AOL_s00215g274 (322 aa).

NAD(+) contacts are provided by residues 47–48 (AV), 104–106 (IAV), 197–201 (YNVSK), and 230–232 (VAT). Residue Y197 is the Proton acceptor of the active site.

The protein belongs to the short-chain dehydrogenases/reductases (SDR) family.

It participates in secondary metabolite biosynthesis; terpenoid biosynthesis. Functionally, short chain dehydrogenase; part of the gene cluster that mediates the biosynthesis of sesquiterpenyl epoxy-cyclohexenoids (SECs) such as anthrobotrisins and arthrosporols, metabolites that possess a novel hybrid carbon skeleton consisting of a polyketide-derived epoxycyclohexenol combined with a terpenoid-derived monocyclic sesquiterpenol substructure (PKS-PTS hybrid). The SEC pathway plays an important role for fungal soil colonization via decreasing fungal nematode-capturing ability. Within the pathway, the cytochrome P450 monooxygenase AOL_s00215g274 is involved in specific regional ketone reductions at C-4 of farnesyl epoxy-quinone. The pathway begins with the biosynthesis of 6-methylsalicylic acid (6-MSA), the first precursor of the polyketide-derived epoxycyclohexenol in arthrosporols, by the polyketide synthase (PKS) AOL_s00215g283 via condensation of 1 acetate and 3 malonate units. The 6-methylsalicylic acid decarboxylase AOL_s00215g281 then catalyzes the decarboxylation of 6-methylsalicylic acid to yield m-cresol. The cytochrome P450 monooxygenase AOL_s00215g282 further oxidizes m-cresol to yield toluquinol. With the assistance of the oxidoreductase AOL_s00215g277, the polyprenyl transferase AOL_s00215g276 catalyzes the farnesylation of toluquinol to produce farnesyl hydroquinone, the hybrid precursor for biosynthesis of SECs. Farnesyl hydroquinone undergoes epoxidation and then subsequent dehydrogenation to form farnesyl epoxy-quinone, the first and simplest SEC. The cytochrome P450 monooxygenase AOL_s00215g278 and the FAD-dependent monooxygenase AOL_s00215g279 might be involved in the oxygenation of the phenol moiety, most likely in the epoxy formation. The cytochrome P450 monooxygenases AOL_s00215g274 and AOL_s00215g280 are involved in specific regional ketone reductions at respectively C-4 and C-1 of farnesyl epoxy-quinone PubMed:33823587. In Arthrobotrys oligospora (strain ATCC 24927 / CBS 115.81 / DSM 1491) (Nematode-trapping fungus), this protein is Short chain dehydrogenase AOL_s00215g274.